Reading from the N-terminus, the 201-residue chain is Dephospho-CoA kinase (201 aa).

Residues 2 to 201 (MIGLTGGIAS…KRWKVIPEDQ (200 aa)) form the DPCK domain. An ATP-binding site is contributed by 10–15 (ASGKSS).

Belongs to the CoaE family.

The protein localises to the cytoplasm. The catalysed reaction is 3'-dephospho-CoA + ATP = ADP + CoA + H(+). Its pathway is cofactor biosynthesis; coenzyme A biosynthesis; CoA from (R)-pantothenate: step 5/5. Functionally, catalyzes the phosphorylation of the 3'-hydroxyl group of dephosphocoenzyme A to form coenzyme A. The chain is Dephospho-CoA kinase from Halalkalibacterium halodurans (strain ATCC BAA-125 / DSM 18197 / FERM 7344 / JCM 9153 / C-125) (Bacillus halodurans).